The sequence spans 148 residues: Transcriptional repressor NrdR (148 aa).

A disordered region spans residues 1 to 22; it reads MKCPYCSAPDSKVVNSRPSDDG. A zinc finger lies at 3–34; the sequence is CPYCSAPDSKVVNSRPSDDGASIRRRRECLNC. Residues 49–136 form the ATP-cone domain; that stretch reads LMVVKRSGPR…VYRDFDSLER (88 aa).

The protein belongs to the NrdR family. Zn(2+) is required as a cofactor.

Its function is as follows. Negatively regulates transcription of bacterial ribonucleotide reductase nrd genes and operons by binding to NrdR-boxes. This Deinococcus deserti (strain DSM 17065 / CIP 109153 / LMG 22923 / VCD115) protein is Transcriptional repressor NrdR.